Consider the following 448-residue polypeptide: N-succinylarginine dihydrolase (448 aa).

Substrate-binding positions include 19 to 28, Asn-110, and 137 to 138; these read GGLSYGNVAS and HR. The active site involves Glu-174. Arg-214 provides a ligand contact to substrate. His-250 is an active-site residue. Substrate-binding residues include Asp-252 and Asn-365. Cys-371 functions as the Nucleophile in the catalytic mechanism.

The protein belongs to the succinylarginine dihydrolase family. Homodimer.

The catalysed reaction is N(2)-succinyl-L-arginine + 2 H2O + 2 H(+) = N(2)-succinyl-L-ornithine + 2 NH4(+) + CO2. It functions in the pathway amino-acid degradation; L-arginine degradation via AST pathway; L-glutamate and succinate from L-arginine: step 2/5. In terms of biological role, catalyzes the hydrolysis of N(2)-succinylarginine into N(2)-succinylornithine, ammonia and CO(2). This is N-succinylarginine dihydrolase from Pseudomonas fluorescens (strain Pf0-1).